The chain runs to 433 residues: Protein arginine N-methyltransferase 2 (433 aa).

The tract at residues 1–27 is disordered; the sequence is MSTSGCSSEKSDFQDSTEGEEEEDTQS. Residues 15 to 26 show a composition bias toward acidic residues; it reads DSTEGEEEEDTQ. The SH3 domain maps to 30-89; that stretch reads LCMREYVVIRDYMAADATQLSLCFGDKVLLLSAVTQDWWWVKHNGICGYVPASYLHDALN. The region spanning 102 to 416 is the SAM-dependent MTase PRMT-type domain; the sequence is DEEYYGSYKT…MSVTLSWVIN (315 aa). S-adenosyl-L-methionine contacts are provided by His115, Arg124, Gly148, Glu171, and Glu200. Catalysis depends on residues Glu214 and Glu223.

It belongs to the class I-like SAM-binding methyltransferase superfamily. Protein arginine N-methyltransferase family. Interacts with ctnnb1.

The protein resides in the cytoplasm. It localises to the nucleus. The catalysed reaction is L-arginyl-[protein] + 2 S-adenosyl-L-methionine = N(omega),N(omega)-dimethyl-L-arginyl-[protein] + 2 S-adenosyl-L-homocysteine + 2 H(+). Its function is as follows. Arginine methyltransferase that methylates the guanidino nitrogens of arginyl residues in proteins such as histones. Involved in growth regulation. Involved in embryonic dorsal development. This is Protein arginine N-methyltransferase 2 (prmt2) from Xenopus tropicalis (Western clawed frog).